The primary structure comprises 213 residues: Ribonuclease T (213 aa).

Residues 28-202 enclose the Exonuclease domain; the sequence is VVVDVETGGF…YDTEQTARLF (175 aa). Residues Asp-31, Glu-33, His-189, and Asp-194 each contribute to the Mg(2+) site. The Proton donor/acceptor role is filled by His-189.

Belongs to the RNase T family. In terms of assembly, homodimer. Mg(2+) is required as a cofactor.

Trims short 3' overhangs of a variety of RNA species, leaving a one or two nucleotide 3' overhang. Responsible for the end-turnover of tRNA: specifically removes the terminal AMP residue from uncharged tRNA (tRNA-C-C-A). Also appears to be involved in tRNA biosynthesis. The chain is Ribonuclease T from Xanthomonas axonopodis pv. citri (strain 306).